The chain runs to 139 residues: Putative pre-16S rRNA nuclease (139 aa).

This sequence belongs to the YqgF nuclease family.

It localises to the cytoplasm. Functionally, could be a nuclease involved in processing of the 5'-end of pre-16S rRNA. The chain is Putative pre-16S rRNA nuclease from Streptococcus suis (strain 98HAH33).